Consider the following 1482-residue polypeptide: Cystic fibrosis transmembrane conductance regulator (1482 aa).

Over 1–77 the chain is Cytoplasmic; sequence MQRSPLEKAS…KLINALQRCF (77 aa). Residues 78–98 form a helical membrane-spanning segment; it reads FWRFTFYGILLYLGEVTKAIQ. The 285-residue stretch at 81–365 folds into the ABC transmembrane type-1 1 domain; the sequence is FTFYGILLYL…WAVQTWYDSL (285 aa). Residues 99–122 lie on the Extracellular side of the membrane; the sequence is PLLLGRIIASYDPDNKMERSIAIY. The helical transmembrane segment at 123–146 threads the bilayer; sequence LGIGLCLLFIMRTLLLHPAIFGLH. Topologically, residues 147–195 are cytoplasmic; sequence HIGMQMRIALFSLIYKKTLKLSSRVLDKISIGQLVSLLSNNLNKFDEGL. The chain crosses the membrane as a helical span at residues 196–216; sequence ALAHFVWIAPLQVMLLMGLLW. Topologically, residues 217–222 are extracellular; sequence ELLQAS. A helical membrane pass occupies residues 223–243; the sequence is AFCGLAFLIVLALLQAGLGRM. Topologically, residues 244 to 298 are cytoplasmic; sequence MMKYRDQRAGKINERLVITSEMIENIQSVKAYCWEEAMEKMIENLRQTELRLTRK. The chain crosses the membrane as a helical span at residues 299–319; it reads AAYVRYVNSSAFFFSGFFVVF. The Extracellular segment spans residues 320-339; sequence LSVLPYALIKGIILRKIFTT. A helical transmembrane segment spans residues 340-358; that stretch reads ISFCIVLRMAVTRQFPWAV. Residues 359–859 lie on the Cytoplasmic side of the membrane; that stretch reads QTWYDSLGAI…YLRYITVHKN (501 aa). ATP contacts are provided by residues Trp-401, 458–465, and Gln-493; that span reads GSTGAGKT. In terms of domain architecture, ABC transporter 1 spans 423–646; the sequence is SGDNRLFFSN…RPDFSSKLMG (224 aa). Cys-524 is lipidated: S-palmitoyl cysteine. 2 positions are modified to phosphoserine: Ser-549 and Ser-660. Residues 654–832 form a disordered R region region; that stretch reads SAERRNSILT…EEINEEDLKE (179 aa). Ser-670 bears the Phosphoserine; by PKA mark. Residue Ser-686 is modified to Phosphoserine. Lys-688 participates in a covalent cross-link: Glycyl lysine isopeptide (Lys-Gly) (interchain with G-Cter in ubiquitin). 2 positions are modified to phosphoserine: Ser-700 and Ser-712. Thr-717 carries the post-translational modification Phosphothreonine. Ser-737, Ser-768, Ser-791, Ser-796, and Ser-814 each carry phosphoserine. A helical transmembrane segment spans residues 860 to 880; the sequence is LIFVLIWCLVIFLAEVAASLV. The 297-residue stretch at 860–1156 folds into the ABC transmembrane type-1 2 domain; it reads LIFVLIWCLV…AVNSSIDVDS (297 aa). Over 881-919 the chain is Extracellular; that stretch reads AFWLIEKTRPQDKGNSTRSTNNTSPVIITSTSAFYMFYI. Asn-895 and Asn-901 each carry an N-linked (GlcNAc...) asparagine glycan. A discontinuously helical membrane pass occupies residues 920–940; sequence YVGVADSLLALGFLRGLPLVH. The Cytoplasmic segment spans residues 941-991; sequence TLITVSKILHQKMLHSVLHAPMSTLNTLKAGAILNRFSKDIAILDDLLPLT. Residues 992–1012 form a helical membrane-spanning segment; sequence IFDFIQLVLIVIGAVVVVSIL. The Extracellular segment spans residues 1013-1014; that stretch reads KP. The helical transmembrane segment at 1015-1035 threads the bilayer; the sequence is YIFLAAVPVIIAFVILRAYFL. Topologically, residues 1036–1096 are cytoplasmic; it reads QTSQQLKQLE…TATWFLYLST (61 aa). The chain crosses the membrane as a helical span at residues 1097–1117; it reads LRWFQMRIEMIFVVFFVAVTF. The Extracellular segment spans residues 1118–1131; sequence ISILTTGEGEGTVG. The chain crosses the membrane as a helical span at residues 1132-1152; that stretch reads IILTLAMNIMSTLQWAVNSSI. Residues 1153–1482 lie on the Cytoplasmic side of the membrane; sequence DVDSLMRSVS…AEEEVQDTRL (330 aa). The region spanning 1212–1445 is the ABC transporter 2 domain; sequence ITVKDLTAKY…KSLFQQAISP (234 aa). Residues Tyr-1221 and 1246 to 1253 each bind ATP; that span reads GRTGSGKS. The interaction with GORASP2 stretch occupies residues 1388–1482; sequence RALKQAFADC…AEEEVQDTRL (95 aa). Cys-1397 is lipidated: S-palmitoyl cysteine. Ser-1446 and Ser-1458 each carry phosphoserine. Positions 1454–1482 are disordered; it reads QRSSSKHRSRAQITALKEEAEEEVQDTRL. Over residues 1472–1482 the composition is skewed to acidic residues; the sequence is EAEEEVQDTRL. The short motif at 1480–1482 is the PDZ-binding element; sequence TRL.

It belongs to the ABC transporter superfamily. ABCC family. CFTR transporter (TC 3.A.1.202) subfamily. Monomer; does not require oligomerization for channel activity. May form oligomers in the membrane. Interacts with SLC26A3, SLC26A6 and NHERF1. Interacts with SHANK2. Interacts with MYO6. Interacts (via C-terminus) with GOPC (via PDZ domain); this promotes CFTR internalization and thereby decreases channel activity. Interacts with SLC4A7 through NHERF1. Found in a complex with MYO5B and RAB11A. Interacts with ANO1. Interacts with SLC26A8. Interacts with AHCYL1; the interaction increases CFTR activity. Interacts with CSE1L. The core-glycosylated form interacts with GORASP2 (via PDZ GRASP-type 1 domain) in respone to ER stress. Interacts with MARCHF2; the interaction leads to CFTR ubiqtuitination and degradation. Interacts with ADGRG2. Post-translationally, N-glycosylated. In terms of processing, phosphorylated; cAMP treatment promotes phosphorylation and activates the channel. Dephosphorylation decreases the ATPase activity (in vitro). Phosphorylation at PKA sites activates the channel. Phosphorylation at PKC sites enhances the response to phosphorylation by PKA. Phosphorylated by AMPK; this inhibits channel activity. Ubiquitinated, leading to its degradation in the lysosome. Deubiquitination by USP10 in early endosomes enhances its endocytic recycling to the cell membrane. Ubiquitinated by RNF185 during ER stress. Ubiquitinated by MARCHF2.

It is found in the apical cell membrane. The protein resides in the early endosome membrane. The protein localises to the cell membrane. It localises to the recycling endosome membrane. Its subcellular location is the endoplasmic reticulum membrane. It is found in the nucleus. It catalyses the reaction ATP + H2O + closed Cl(-) channel = ADP + phosphate + open Cl(-) channel.. The catalysed reaction is chloride(in) = chloride(out). The enzyme catalyses hydrogencarbonate(in) = hydrogencarbonate(out). It carries out the reaction ATP + H2O = ADP + phosphate + H(+). Epithelial ion channel that plays an important role in the regulation of epithelial ion and water transport and fluid homeostasis. Mediates the transport of chloride ions across the cell membrane. Possesses an intrinsic ATPase activity and utilizes ATP to gate its channel; the passive flow of anions through the channel is gated by cycles of ATP binding and hydrolysis by the ATP-binding domains. The ion channel is also permeable to HCO(3)(-); selectivity depends on the extracellular chloride concentration. Exerts its function also by modulating the activity of other ion channels and transporters. Contributes to the regulation of the pH and the ion content of the epithelial fluid layer. Modulates the activity of the epithelial sodium channel (ENaC) complex, in part by regulating the cell surface expression of the ENaC complex. May regulate bicarbonate secretion and salvage in epithelial cells by regulating the transporter SLC4A7. Can inhibit the chloride channel activity of ANO1. Plays a role in the chloride and bicarbonate homeostasis during sperm epididymal maturation and capacitation. The protein is Cystic fibrosis transmembrane conductance regulator of Rhinolophus ferrumequinum (Greater horseshoe bat).